The chain runs to 570 residues: Pleckstrin homology domain-containing family D member 1 (570 aa).

Over residues 1 to 13 (MTTKTTPKELKAK) the composition is skewed to basic and acidic residues. Residues 1–42 (MTTKTTPKELKAKKESKKKGSAPEPPKNGPPRTSPPNTIEKK) are disordered. The span at 23 to 34 (PEPPKNGPPRTS) shows a compositional bias: pro residues. Positions 83-192 (GVQNYGILMK…WLKALRSATK (110 aa)) constitute a PH domain. A coiled-coil region spans residues 202–448 (ETMIRELENR…TGAQMTELQE (247 aa)). Residues 542–551 (SKRGIRSSFR) show a composition bias toward basic residues. Residues 542–570 (SKRGIRSSFRKKTDSITTQPREKEPLMQL) are disordered. A compositionally biased stretch (basic and acidic residues) spans 561–570 (PREKEPLMQL).

It belongs to the PLEKHD1 family.

In Caenorhabditis elegans, this protein is Pleckstrin homology domain-containing family D member 1.